A 746-amino-acid chain; its full sequence is Hyperosmolality-gated Ca2+ permeable channel 2.1 (746 aa).

The next 10 helical transmembrane spans lie at Ile3 to Leu23, Met90 to Leu110, Leu144 to Phe164, Ile357 to Ile377, Val405 to Leu425, Ala445 to Gly465, Ala492 to Met512, Val560 to Tyr580, Ile601 to Phe621, and Leu623 to Phe643. Positions Leu692–Glu702 are enriched in polar residues. Residues Leu692 to Gly723 form a disordered region. Residues Lys708 to Gly723 show a composition bias toward basic and acidic residues.

Belongs to the CSC1 (TC 1.A.17) family.

The protein resides in the membrane. Acts as an osmosensitive calcium-permeable cation channel. This chain is Hyperosmolality-gated Ca2+ permeable channel 2.1, found in Arabidopsis thaliana (Mouse-ear cress).